The following is a 279-amino-acid chain: Thymidylate synthase (279 aa).

Residue R141–R142 participates in dUMP binding. C161 (nucleophile) is an active-site residue. Residues R181–D184, N192, and H222–Y224 each bind dUMP. D184 contributes to the (6R)-5,10-methylene-5,6,7,8-tetrahydrofolate binding site. Residue A278 participates in (6R)-5,10-methylene-5,6,7,8-tetrahydrofolate binding.

Belongs to the thymidylate synthase family. Bacterial-type ThyA subfamily. Homodimer.

Its subcellular location is the cytoplasm. The catalysed reaction is dUMP + (6R)-5,10-methylene-5,6,7,8-tetrahydrofolate = 7,8-dihydrofolate + dTMP. It functions in the pathway pyrimidine metabolism; dTTP biosynthesis. Its function is as follows. Catalyzes the reductive methylation of 2'-deoxyuridine-5'-monophosphate (dUMP) to 2'-deoxythymidine-5'-monophosphate (dTMP) while utilizing 5,10-methylenetetrahydrofolate (mTHF) as the methyl donor and reductant in the reaction, yielding dihydrofolate (DHF) as a by-product. This enzymatic reaction provides an intracellular de novo source of dTMP, an essential precursor for DNA biosynthesis. The sequence is that of Thymidylate synthase from Bacillus licheniformis (strain ATCC 14580 / DSM 13 / JCM 2505 / CCUG 7422 / NBRC 12200 / NCIMB 9375 / NCTC 10341 / NRRL NRS-1264 / Gibson 46).